The following is a 197-amino-acid chain: Imidazoleglycerol-phosphate dehydratase (197 aa).

This sequence belongs to the imidazoleglycerol-phosphate dehydratase family.

Its subcellular location is the cytoplasm. The enzyme catalyses D-erythro-1-(imidazol-4-yl)glycerol 3-phosphate = 3-(imidazol-4-yl)-2-oxopropyl phosphate + H2O. The protein operates within amino-acid biosynthesis; L-histidine biosynthesis; L-histidine from 5-phospho-alpha-D-ribose 1-diphosphate: step 6/9. The protein is Imidazoleglycerol-phosphate dehydratase of Pseudomonas putida (strain GB-1).